Reading from the N-terminus, the 466-residue chain is 3-isopropylmalate dehydratase large subunit (466 aa).

Cys-347, Cys-407, and Cys-410 together coordinate [4Fe-4S] cluster.

Belongs to the aconitase/IPM isomerase family. LeuC type 1 subfamily. In terms of assembly, heterodimer of LeuC and LeuD. Requires [4Fe-4S] cluster as cofactor.

It carries out the reaction (2R,3S)-3-isopropylmalate = (2S)-2-isopropylmalate. The protein operates within amino-acid biosynthesis; L-leucine biosynthesis; L-leucine from 3-methyl-2-oxobutanoate: step 2/4. Its function is as follows. Catalyzes the isomerization between 2-isopropylmalate and 3-isopropylmalate, via the formation of 2-isopropylmaleate. The sequence is that of 3-isopropylmalate dehydratase large subunit from Buchnera aphidicola subsp. Diuraphis noxia.